We begin with the raw amino-acid sequence, 480 residues long: Ftsk domain-containing protein YdcQ (480 aa).

2 helical membrane-spanning segments follow: residues 25–45 and 71–91; these read VKLA…FLFW and SVLC…FLLF. A FtsK domain is found at 217 to 399; it reads MKHISWQFDK…LGLMSDTGYG (183 aa). 234–241 contacts ATP; that stretch reads GGTGGGKT.

The protein resides in the cell membrane. The protein is Ftsk domain-containing protein YdcQ (ydcQ) of Bacillus subtilis (strain 168).